The primary structure comprises 249 residues: BPI fold-containing family A member 2 (249 aa).

The first 18 residues, 1–18 (MLQLWKLVLLCGVLTGTS), serve as a signal peptide directing secretion. 2 N-linked (GlcNAc...) asparagine glycosylation sites follow: Asn124 and Asn132. Cysteines 174 and 217 form a disulfide.

Belongs to the BPI/LBP/Plunc superfamily. Plunc family. In terms of tissue distribution, detected in submandibular gland. Secreted into saliva.

It is found in the secreted. Has strong antibacterial activity against P.aeruginosa. The polypeptide is BPI fold-containing family A member 2 (BPIFA2) (Homo sapiens (Human)).